The primary structure comprises 482 residues: DnaJ protein P58IPK homolog (482 aa).

Positions Met1 to Ala42 are cleaved as a signal peptide. TPR repeat units follow at residues Ala50 to Leu83, Glu85 to Asp117, Ala130 to Cys164, Lys166 to Asn198, Leu199 to His232, Leu245 to His278, Val283 to Leu316, and Glu318 to Met350. A J domain is found at Asp370–Glu436.

Interacts with the helicase domain of the tobamovirus (TMV) and the tobacco etch virus (TEV) replicases. In terms of tissue distribution, expressed in flower buds and flowers.

The protein localises to the endoplasmic reticulum lumen. Functionally, plays an important positive role in viral symptom development and is required for viral multiplication and pathogenesis. This Arabidopsis thaliana (Mouse-ear cress) protein is DnaJ protein P58IPK homolog (P58IPK).